The chain runs to 278 residues: HTH-type transcriptional activator RhaS (278 aa).

In terms of domain architecture, HTH araC/xylS-type spans 174-272 (NLLLAWLEDH…NWSPRDIRQG (99 aa)). 2 DNA-binding regions (H-T-H motif) span residues 191 to 212 (DAVAEQFSLSLRTLHRQLKQQT) and 239 to 262 (VTDIAYRCGFSDSNHFSTLFRREF).

As to quaternary structure, binds DNA as a dimer.

It localises to the cytoplasm. In terms of biological role, activates expression of the rhaBAD and rhaT operons. This is HTH-type transcriptional activator RhaS from Escherichia coli O139:H28 (strain E24377A / ETEC).